A 1024-amino-acid chain; its full sequence is NLR family CARD domain-containing protein 4 (1024 aa).

Residues Met1–Ser88 enclose the CARD domain. A nucleotide-binding domain (NBD) region spans residues Glu95–Gly298. Residues Ser163–Lys476 enclose the NACHT domain. Gly169–Ser176 contributes to the ATP binding site. Residues Ser356–Glu463 are winged-helix domain (WHD). Residue Ser533 is modified to Phosphoserine. 12 LRR repeats span residues Phe578 to Phe598, Lys656 to Tyr679, Val735 to Ser758, Leu762 to Glu785, Leu787 to Val812, Glu824 to Leu847, Val848 to Glu870, Leu878 to His902, Lys911 to Lys933, Leu936 to Asn963, Lys965 to Arg985, and Glu999 to Leu1021.

As to quaternary structure, homooligomer; homooligomerizes to induce formation of the NLRC4 inflammasome. Homooligomerizes following activation by pathogenic proteins. Component of the NLRC4 inflammasome, at least composed of NLRC4 and caspase-1 (CASP1). Some NLRC4 inflammasomes contain PYCARD/ASC, while some others directly contact and activate CASP1. Interacts (via CARD domain) with PYCARD/ASC, pro-caspase-1 (CASP1), NOD2, BCL10 and NALP1 (NAC) by CARD-CARD interaction. Interacts with EIF2AK2/PKR. Post-translationally, phosphorylated at Ser-533 following infection of macrophages with S.typhimurium (Salmonella). Phosphorylation is essential for NLRC4 inflammasome function to promote caspase-1 activation and pyroptosis. PRKCD phosphorylates Ser-533 in vitro. Isoform 2 is expressed ubiquitously, although highly expressed in lung and spleen. Isoform 1 is highly expressed in lung, followed by leukocytes especially monocytes, lymph node, colon, brain, prostate, placenta, spleen, bone marrow and fetal liver. Isoform 4 is only detected in brain.

The protein localises to the cytoplasm. The protein resides in the cytosol. Its subcellular location is the inflammasome. Functionally, key component of inflammasomes that indirectly senses specific proteins from pathogenic bacteria and fungi and responds by assembling an inflammasome complex that promotes caspase-1 activation, cytokine production and macrophage pyroptosis. The NLRC4 inflammasome is activated as part of the innate immune response to a range of intracellular bacteria. In Homo sapiens (Human), this protein is NLR family CARD domain-containing protein 4 (NLRC4).